The primary structure comprises 99 residues: MLFRLLSPLSPLALTALLLFLLSPGEVSGLLLRPLPAPCLLLFLPFQILSNLLFLLFLPLFFSLPLLLSPSLPITMRFPARWRFPPWRAPSQPAAAFLF.

The SH3-binding motif lies at 4–11 (RLLSPLSP). Residues 12-32 (LALTALLLFLLSPGEVSGLLL) form a helical membrane-spanning segment. Positions 33-38 (RPLPAP) match the SH3-binding motif. Residues 48 to 68 (ILSNLLFLLFLPLFFSLPLLL) traverse the membrane as a helical segment. Short sequence motifs (SH3-binding) lie at residues 70–77 (PSLPITMR) and 88–93 (RAPSQP).

It belongs to the HTLV-1 accessory protein p12I family. In terms of assembly, p12I is a homodimer. Interacts with human CANX, CALR, ATP6V0C, IL2RB, IL2RG. Binds to MHC-I heavy chains HLA-A2, HLA-B7 and HLA-Cw4. Post-translationally, ubiquitinated; a fraction of P12I is degraded via the ubiquitin system.

The protein resides in the host endoplasmic reticulum membrane. It localises to the host Golgi apparatus. It is found in the host cis-Golgi network membrane. Its function is as follows. p12I is a modulator of T-lymphocyte proliferation and immune function and may contribute to establish a persistent infection. Binds and down-modulates cell surface expression of interleukin-2 receptors IL2RB and IL2RG. Also down-modulates cell surface MHC-I molecules by binding to free immature MHC-I heavy chains in the ER and targeting them to the proteasome for degradation. Binding to IL2RB mediates recruitment of JAK1 and JAK3. As a result of this interaction, p12I increases DNA-binding and transcriptional activity of STAT5. This chain is Accessory protein p12I, found in Homo sapiens (Human).